The primary structure comprises 431 residues: Enolase (431 aa).

Residue Gln166 coordinates (2R)-2-phosphoglycerate. The active-site Proton donor is Glu208. Residues Asp245, Glu288, and Asp315 each contribute to the Mg(2+) site. (2R)-2-phosphoglycerate is bound by residues Lys340, Arg369, Ser370, and Lys391. Catalysis depends on Lys340, which acts as the Proton acceptor.

This sequence belongs to the enolase family. Mg(2+) serves as cofactor.

It is found in the cytoplasm. Its subcellular location is the secreted. The protein resides in the cell surface. It carries out the reaction (2R)-2-phosphoglycerate = phosphoenolpyruvate + H2O. It functions in the pathway carbohydrate degradation; glycolysis; pyruvate from D-glyceraldehyde 3-phosphate: step 4/5. In terms of biological role, catalyzes the reversible conversion of 2-phosphoglycerate (2-PG) into phosphoenolpyruvate (PEP). It is essential for the degradation of carbohydrates via glycolysis. The polypeptide is Enolase (Clostridium tetani (strain Massachusetts / E88)).